The sequence spans 141 residues: Hemoglobin subunit alpha-D (141 aa).

The Globin domain occupies 1–141; sequence MLSADEKQLI…VSDVLAEKYR (141 aa). 2 residues coordinate heme b: H58 and H87.

This sequence belongs to the globin family. In terms of assembly, heterotetramer of two alpha-D chains and two beta chains. As to expression, red blood cells.

Involved in oxygen transport from the lung to the various peripheral tissues. The sequence is that of Hemoglobin subunit alpha-D (HBAD) from Phrynops hilarii (Snake-necked turtle).